We begin with the raw amino-acid sequence, 4303 residues long: Polycystin-1 (4303 aa).

Positions 1–23 are cleaved as a signal peptide; it reads MPPAAPARLALALGLGLWLGALA. In terms of domain architecture, LRRNT spans 24–67; that stretch reads GGPGRGCGPCEPPCLCGPAPGAACRVNCSGRGLRTLGPALRIPA. The Extracellular segment spans residues 24–3074; that stretch reads GGPGRGCGPC…VFPEPTADVN (3051 aa). N-linked (GlcNAc...) asparagine glycans are attached at residues Asn-50 and Asn-89. 2 LRR repeats span residues 68–91 and 92–113; these read DATALDVSHNLLRALDVGLLANLS and ALAELDISNNKISTLEEGIFAN. 2 N-linked (GlcNAc...) asparagine glycosylation sites follow: Asn-116 and Asn-121. Residues 125 to 178 enclose the LRRCT domain; it reads NPFECDCGLAWLPRWAEEQQVRVVQPEAATCAGPGSLAGQPLLGIPLLDSGCGE. The 95-residue stretch at 177 to 271 folds into the WSC domain; sequence GEEYVACLPD…PTLLQHVFPA (95 aa). A glycan (N-linked (GlcNAc...) asparagine) is linked at Asn-187. In terms of domain architecture, PKD 1 spans 272–359; the sequence is SPGATLVGPH…VQVEAAPAAL (88 aa). Residues 415 to 531 form the C-type lectin domain; sequence GNGHCYRLVV…CSAPHSYVCE (117 aa). Disulfide bonds link Cys-436–Cys-530 and Cys-508–Cys-522. The tract at residues 616–635 is disordered; that stretch reads AGTPENGSEPESRSPDNRTQ. N-linked (GlcNAc...) asparagine glycosylation is found at Asn-621 and Asn-632. Residues 638 to 671 enclose the LDL-receptor class A; atypical domain; that stretch reads PACMPGGRWCPGANICLPLDASCHPQACANGCTS. 3 disulfides stabilise this stretch: Cys-640–Cys-653, Cys-647–Cys-665, and Cys-660–Cys-669. Residues 743–817 form the PKD 2 domain; it reads LSANASSWLP…RHNLSCSFDV (75 aa). N-linked (GlcNAc...) asparagine glycans are attached at residues Asn-746, Asn-810, Asn-841, Asn-854, Asn-890, Asn-921, Asn-1004, Asn-1010, Asn-1034, Asn-1072, Asn-1113, Asn-1178, Asn-1194, Asn-1240, Asn-1269, Asn-1336, Asn-1348, Asn-1382, Asn-1450, Asn-1455, Asn-1474, Asn-1518, Asn-1541, Asn-1554, Asn-1563, Asn-1647, Asn-1661, Asn-1733, Asn-1791, Asn-1834, Asn-1867, and Asn-1880. PKD domains are found at residues 855–928, 935–1020, 1023–1129, 1127–1215, 1213–1298, 1294–1383, 1382–1469, 1468–1551, 1550–1635, 1634–1721, 1719–1805, 1807–1890, 1889–1974, 1977–2057, and 2060–2148; these read ATAT…RVTA, LRAT…NRMQ, QVST…LPSV, PSVA…LRGL, RGLS…EVLR, LEVL…VGNV, NVTL…VLVT, VTSI…VRGL, GLVV…IEGL, GLQV…VGWL, GWLM…VSGL, IRAS…IVGL, GLVL…VSGL, PNCC…VLEV, and AVQY…ACRE. N-linked (GlcNAc...) asparagine glycosylation is found at Asn-1991, Asn-2050, Asn-2074, Asn-2125, Asn-2248, Asn-2353, Asn-2395, Asn-2412, Asn-2567, Asn-2578, Asn-2645, Asn-2718, Asn-2754, Asn-2841, Asn-2878, Asn-2925, Asn-2956, and Asn-2994. Positions 2146 to 2833 constitute an REJ domain; that stretch reads CREPEVDVVL…QLIFLVDSNP (688 aa). Positions 2862 to 3063 constitute a GAIN-B domain; that stretch reads PIERLASERA…SLFVPPSHVR (202 aa). A disulfide bridge connects residues Cys-3015 and Cys-3043. The interval 3015–3063 is GPS; the sequence is CQYFSEEDMVWRTEGLLPLEETSPRQAVCLTRHLTAFGASLFVPPSHVR. Residues 3075–3095 form a helical membrane-spanning segment; that stretch reads YIVMLTCAVCLVTYMVMAAIL. Topologically, residues 3096 to 3277 are cytoplasmic; the sequence is HKLDQLDASR…DRPPRSRFTR (182 aa). One can recognise a PLAT domain in the interval 3118 to 3233; that stretch reads FKYEILVKTG…EANGGLVEKE (116 aa). The chain crosses the membrane as a helical span at residues 3278-3298; that stretch reads IQRATCCVLLICLFLGANAVW. At 3299–3323 the chain is on the extracellular side; that stretch reads YGAVGDSAYSTGHVSRLSPLSVDTV. Residues 3324-3344 form a helical membrane-spanning segment; that stretch reads AVGLVSSVVVYPVYLAILFLF. Over 3345 to 3559 the chain is Cytoplasmic; that stretch reads RMSRSKVAGS…LPAWCASLAH (215 aa). A helical transmembrane segment spans residues 3560 to 3580; it reads GLSLLLVAVAVAVSGWVGASF. The Extracellular segment spans residues 3581 to 3582; the sequence is PP. A helical transmembrane segment spans residues 3583–3603; that stretch reads GVSVAWLLSSSASFLASFLGW. Over 3604 to 3665 the chain is Cytoplasmic; sequence EPLKVLLEAL…LAKEEARKVK (62 aa). Residues 3666-3686 traverse the membrane as a helical segment; sequence RLHGMLRSLLVYMLFLLVTLL. Over 3687-3901 the chain is Extracellular; sequence ASYGDASCHG…RLSAGLSLPL (215 aa). N-linked (GlcNAc...) asparagine glycosylation is found at Asn-3738, Asn-3790, and Asn-3845. A helical transmembrane segment spans residues 3902–3922; that stretch reads LTSVCLLLFAVHFAVAEARTW. Over 3923 to 3935 the chain is Cytoplasmic; that stretch reads HREGRWRVLRLGA. The helical transmembrane segment at 3936–3956 threads the bilayer; it reads WARWLLVALTAATALVRLAQL. Residues 3957–3984 are Extracellular-facing; that stretch reads GAADRQWTRFVRGRPRRFTSFDQVAQLS. A helical transmembrane segment spans residues 3985–4005; it reads SAARGLAASLLFLLLVKAAQQ. The Cytoplasmic portion of the chain corresponds to 4006–4027; that stretch reads LRFVRQWSVFGKTLCRALPELL. A helical membrane pass occupies residues 4028–4048; that stretch reads GVTLGLVVLGVAYAQLAILLV. The Extracellular segment spans residues 4049-4090; the sequence is SSCVDSLWSVAQALLVLCPGTGLSTLCPAESWHLSPLLCVGL. The chain crosses the membrane as a helical span at residues 4091–4110; that stretch reads WALRLWGALRLGAVILRWRY. The Cytoplasmic segment spans residues 4111-4303; the sequence is HALRGELYRP…AKNKVHPSST (193 aa). Disordered regions lie at residues 4160–4196 and 4243–4303; these read PLPSRSSRGSKVSPDVPPPSAGSDASHPSTSSSQLDG and LHSL…PSST. Phosphoserine; by PRKX; in vitro is present on Ser-4166. Residues 4185–4195 are compositionally biased toward polar residues; it reads SHPSTSSSQLD. Residues 4220-4251 are a coiled coil; sequence EALLTQFDRLNQATEDVYQLEQQLHSLQGRRS. Residues 4253–4269 are compositionally biased toward low complexity; sequence RAPAGSSRGPSPGLRPA. A compositionally biased stretch (basic residues) spans 4292–4303; it reads LRAKNKVHPSST.

Belongs to the polycystin family. As to quaternary structure, component of the heterotetrameric polycystin channel complex with PKD2; the tetramer contains one PKD1 chain and three PKD2 chains. Interacts with PKD2; the interaction is required for ciliary localization. Interacts with PKD2L1. Interacts with PRKX; involved in differentiation and controlled morphogenesis of the kidney. Interacts (via extracellular domain) with WNT3A, WNT4, WNT5A and WNT9B. Interacts with DVL1 and DVL2. Interacts with NPHP1 (via SH3 domain). Interacts with BBS1, BBS4, BBS5 and TTC8. Interacts with RGS7. Interacts (via the PKD repeats in the N-terminal extracellular region) with EPCIP; the interaction is not dependent on N-glycosylation of either protein. N-glycosylated. Post-translationally, after synthesis, undergoes cleavage between Leu-3048 and Thr-3049 in the GPS region of the GAIN-B domain. Cleavage at the GPS region occurs through a cis-autoproteolytic mechanism involving an ester-intermediate via N-O acyl rearrangement. This process takes place in the early secretory pathway, depends on initial N-glycosylation, and requires the REJ domain. There is evidence that cleavage at GPS region is incomplete. Uncleaved and cleaved products may have different functions in vivo.

Its subcellular location is the cell membrane. The protein localises to the cell projection. It localises to the cilium. It is found in the endoplasmic reticulum. The protein resides in the golgi apparatus. Its subcellular location is the vesicle. The protein localises to the secreted. It localises to the extracellular exosome. Functionally, component of a heteromeric calcium-permeable ion channel formed by PKD1 and PKD2 that is activated by interaction between PKD1 and a Wnt family member, such as WNT3A and WNT9B. Both PKD1 and PKD2 are required for channel activity. Involved in renal tubulogenesis. Involved in fluid-flow mechanosensation by the primary cilium in renal epithelium. Acts as a regulator of cilium length, together with PKD2. The dynamic control of cilium length is essential in the regulation of mechanotransductive signaling. The cilium length response creates a negative feedback loop whereby fluid shear-mediated deflection of the primary cilium, which decreases intracellular cAMP, leads to cilium shortening and thus decreases flow-induced signaling. May be an ion-channel regulator. Involved in adhesive protein-protein and protein-carbohydrate interactions. Likely to be involved with polycystin-1-interacting protein 1 in the detection, sequestration and exocytosis of senescent mitochondria. In Homo sapiens (Human), this protein is Polycystin-1.